Consider the following 1066-residue polypeptide: Pumilio homolog 2 (1066 aa).

Residues 1–260 form an interaction with SNAPIN region; the sequence is MNHDFQALAL…ATVGLFDYNS (260 aa). A phosphoserine mark is found at S67, S82, and S102. Residues 106–204 form a disordered region; sequence KLDSRFRKGN…NPSEGLGPLP (99 aa). Residues 119 to 133 show a composition bias toward basic and acidic residues; it reads RDAETDGPEKGDQKG. Residues S136, S178, and S182 each carry the phosphoserine modification. A phosphothreonine mark is found at T184 and T396. The segment at 494–553 is disordered; sequence STNGLFRPIGTQPPQQQQQQPSTNLQSNSFYGSSSLTNSSQSSSLFSHGPGQPGSTSLGF. Low complexity predominate over residues 505 to 514; that stretch reads QPPQQQQQQP. The segment covering 515–525 has biased composition (polar residues); sequence STNLQSNSFYG. The segment covering 526–540 has biased composition (low complexity); it reads SSSLTNSSQSSSLFS. Phosphoserine is present on residues S587 and S592. Residues 620–650 are disordered; sequence SPIGMPLPSQTPGHSLTPPPSLSSHGSSSSL. Residues 630-650 are compositionally biased toward low complexity; it reads TPGHSLTPPPSLSSHGSSSSL. R674 is subject to Omega-N-methylarginine. S684 and S700 each carry phosphoserine. The region spanning 706 to 1048 is the PUM-HD domain; that stretch reads GRSRLLEDFR…HILAKLEKYY (343 aa). Pumilio repeat units lie at residues 726 to 761, 762 to 797, 798 to 835, 836 to 871, 872 to 907, 908 to 943, 944 to 979, and 983 to 1022; these read DLIGHIVEFSQDQHGSRFIQQKLERATPAERQMVFN, EILQAAYQLMTDVFGNYVIQKFFEFGSLDQKLALAT, RIRGHVLPLALQMYGCRVIQKALESISSDQQVISEMVK, ELDGHVLKCVKDQNGNHVVQKCIECVQPQSLQFIID, AFKGQVFVLSTHPYGCRVIQRILEHCTAEQTLPILE, ELHQHTEQLVQDQYGNYVIQHVLEHGRPEDKSKIVS, EIRGKVLALSQHKFASNVVEKCVTHASRAERALLID, and CQNDGPHSALYTMMKDQYANYVVQKMIDMAEPAQRKIIMH. The adenine-nucleotide binding in RNA target stretch occupies residues 741-745; it reads SRFIQ. Positions 777 to 781 are uracil-nucleotide binding in RNA target; it reads NYVIQ. An adenine-nucleotide binding in RNA target region spans residues 813–817; the sequence is CRVIQ. The segment at 851-855 is non-specific-nucleotide binding in RNA target; sequence NHVVQ. The adenine-nucleotide binding in RNA target stretch occupies residues 887–891; it reads CRVIQ. The uracil-nucleotide binding in RNA target stretch occupies residues 923 to 927; it reads NYVIQ. Positions 959-963 are guanine-nucleotide binding in RNA target; sequence SNVVE. Residues 1002-1006 are uracil-nucleotide binding in RNA target; it reads NYVVQ.

Homodimer; homodimerizes in vitro. Interacts with DAZ1, DAZL and NANOS1 via its pumilio repeats. Interacts with NANOS3. Interacts with SNAPIN. Recruits the CCR4-POP2-NOT deadenylase leading to translational inhibition and mRNA degradation. Interacts with DDX20. In case of viral infection, interacts with DHX58. Interacts with TRIM71 (via NHL repeats) in an RNA-dependent manner. Expressed in male germ cells of adult testis (at protein level). Highly expressed in testis and ovary. Predominantly expressed in stem cells and germ cells. Expressed at lower level in brain, heart, kidney, liver, muscle, placenta, intestine and stomach Expressed in cerebellum, corpus callosum, caudate nucleus, hippocampus, medulla oblongata and putamen. Expressed in all fetal tissues tested.

Its subcellular location is the cytoplasm. The protein resides in the cytoplasmic granule. The protein localises to the perinuclear region. Its function is as follows. Sequence-specific RNA-binding protein that acts as a post-transcriptional repressor by binding the 3'-UTR of mRNA targets. Binds to an RNA consensus sequence, the Pumilio Response Element (PRE), 5'-UGUANAUA-3', that is related to the Nanos Response Element (NRE) (, PubMed:21397187). Mediates post-transcriptional repression of transcripts via different mechanisms: acts via direct recruitment of the CCR4-POP2-NOT deadenylase leading to translational inhibition and mRNA degradation. Also mediates deadenylation-independent repression by promoting accessibility of miRNAs. Acts as a post-transcriptional repressor of E2F3 mRNAs by binding to its 3'-UTR and facilitating miRNA regulation. Plays a role in cytoplasmic sensing of viral infection. Represses a program of genes necessary to maintain genomic stability such as key mitotic, DNA repair and DNA replication factors. Its ability to repress those target mRNAs is regulated by the lncRNA NORAD (non-coding RNA activated by DNA damage) which, due to its high abundance and multitude of PUMILIO binding sites, is able to sequester a significant fraction of PUM1 and PUM2 in the cytoplasm. May regulate DCUN1D3 mRNA levels. May support proliferation and self-renewal of stem cells. Binds specifically to miRNA MIR199A precursor, with PUM1, regulates miRNA MIR199A expression at a postranscriptional level. The sequence is that of Pumilio homolog 2 (PUM2) from Homo sapiens (Human).